We begin with the raw amino-acid sequence, 201 residues long: Phospholipase A2 inhibitor NAI (201 aa).

Positions 1 to 19 (MKSLQIICLLFVLVARGSC) are cleaved as a signal peptide. Cystine bridges form between C22–C47, C25–C32, C40–C68, C74–C95, C96–C101, C119–C144, C137–C166, and C170–C191. The N-linked (GlcNAc...) asparagine glycan is linked to N176.

This sequence belongs to the CNF-like-inhibitor family. In terms of assembly, heterotrimer of 2 subunits A and 1 subunit B; non-covalently linked. In terms of processing, N-glycosylated, probably by biantennary structure. Glycosylation does not change PLA2 inhibitory activity. As to expression, expressed by the liver.

The protein localises to the secreted. Its function is as follows. Inhibits the enzymatic activity of all phospholipase A2 tested, binding them with micromole to nanomole affinity. The polypeptide is Phospholipase A2 inhibitor NAI (Notechis ater (Black tiger snake)).